The sequence spans 864 residues: Leucine--tRNA ligase (864 aa).

A 'HIGH' region motif is present at residues 42–52 (PYPSGKLHMGH). The 'KMSKS' region signature appears at 624–628 (KMSKS). K627 serves as a coordination point for ATP.

This sequence belongs to the class-I aminoacyl-tRNA synthetase family.

The protein resides in the cytoplasm. It catalyses the reaction tRNA(Leu) + L-leucine + ATP = L-leucyl-tRNA(Leu) + AMP + diphosphate. The polypeptide is Leucine--tRNA ligase (Burkholderia pseudomallei (strain 668)).